Here is a 254-residue protein sequence, read N- to C-terminus: Adenosine 5'-phosphosulfate reductase (254 aa).

Cysteine 131, cysteine 132, cysteine 212, and cysteine 215 together coordinate [4Fe-4S] cluster. Cysteine 238 functions as the Nucleophile; cysteine thiosulfonate intermediate in the catalytic mechanism.

The protein belongs to the PAPS reductase family. CysH subfamily. It depends on [4Fe-4S] cluster as a cofactor.

The protein localises to the cytoplasm. The enzyme catalyses [thioredoxin]-disulfide + sulfite + AMP + 2 H(+) = adenosine 5'-phosphosulfate + [thioredoxin]-dithiol. It participates in sulfur metabolism; hydrogen sulfide biosynthesis; sulfite from sulfate. Functionally, catalyzes the formation of sulfite from adenosine 5'-phosphosulfate (APS) using thioredoxin as an electron donor. The chain is Adenosine 5'-phosphosulfate reductase from Mesorhizobium japonicum (strain LMG 29417 / CECT 9101 / MAFF 303099) (Mesorhizobium loti (strain MAFF 303099)).